A 360-amino-acid chain; its full sequence is Peptide chain release factor 1 (360 aa).

At Q235 the chain carries N5-methylglutamine.

This sequence belongs to the prokaryotic/mitochondrial release factor family. In terms of processing, methylated by PrmC. Methylation increases the termination efficiency of RF1.

The protein localises to the cytoplasm. Functionally, peptide chain release factor 1 directs the termination of translation in response to the peptide chain termination codons UAG and UAA. The protein is Peptide chain release factor 1 of Leptothrix cholodnii (strain ATCC 51168 / LMG 8142 / SP-6) (Leptothrix discophora (strain SP-6)).